Here is a 936-residue protein sequence, read N- to C-terminus: Translation initiation factor IF-2 (936 aa).

A disordered region spans residues 102–332 (PEPGPVLKKD…SGSRQKFRKM (231 aa)). Basic and acidic residues predominate over residues 108 to 119 (LKKDHVHEEPEK). Positions 127–137 (SEPEVEPEVEP) are enriched in acidic residues. Positions 151–160 (PTEAVSVPEP) are enriched in low complexity. The segment covering 182-194 (QSSTMKAQASPEM) has biased composition (polar residues). Composition is skewed to basic and acidic residues over residues 217-227 (SALDRGSESDR) and 237-267 (KEQA…EAKT). Low complexity predominate over residues 272-281 (KAAGTTGSAA). Positions 287–297 (SKKKKGGKKKK) are enriched in basic residues. Positions 433 to 603 (IRPPVVTIMG…LMEAEIRELK (171 aa)) constitute a tr-type G domain. The G1 stretch occupies residues 442–449 (GHVDHGKT). 442-449 (GHVDHGKT) provides a ligand contact to GTP. The tract at residues 467–471 (GITQH) is G2. A G3 region spans residues 489 to 492 (DTPG). GTP is bound by residues 489–493 (DTPGH) and 543–546 (NKID). The tract at residues 543 to 546 (NKID) is G4. The tract at residues 579 to 581 (SAK) is G5.

The protein belongs to the TRAFAC class translation factor GTPase superfamily. Classic translation factor GTPase family. IF-2 subfamily.

The protein resides in the cytoplasm. In terms of biological role, one of the essential components for the initiation of protein synthesis. Protects formylmethionyl-tRNA from spontaneous hydrolysis and promotes its binding to the 30S ribosomal subunits. Also involved in the hydrolysis of GTP during the formation of the 70S ribosomal complex. In Prosthecochloris aestuarii (strain DSM 271 / SK 413), this protein is Translation initiation factor IF-2.